The primary structure comprises 246 residues: Putative F-box/LRR-repeat protein 9 (246 aa).

In terms of domain architecture, F-box spans 18-65; sequence YRNWAELPPELTSSILLRLGAIEILQNAQRVCKSWRRVCQDPSMWRKI.

This is Putative F-box/LRR-repeat protein 9 (FBL9) from Arabidopsis thaliana (Mouse-ear cress).